A 642-amino-acid polypeptide reads, in one-letter code: Threonine--tRNA ligase (642 aa).

Residues 1-61 enclose the TGS domain; that stretch reads MPVITLPDGS…ENDATLSIIT (61 aa). Residues 243-534 are catalytic; that stretch reads DHRKIGKQLD…LTEEFAGFFP (292 aa). Positions 334, 385, and 511 each coordinate Zn(2+).

Belongs to the class-II aminoacyl-tRNA synthetase family. In terms of assembly, homodimer. Zn(2+) is required as a cofactor.

It localises to the cytoplasm. The catalysed reaction is tRNA(Thr) + L-threonine + ATP = L-threonyl-tRNA(Thr) + AMP + diphosphate + H(+). Catalyzes the attachment of threonine to tRNA(Thr) in a two-step reaction: L-threonine is first activated by ATP to form Thr-AMP and then transferred to the acceptor end of tRNA(Thr). Also edits incorrectly charged L-seryl-tRNA(Thr). In Salmonella heidelberg (strain SL476), this protein is Threonine--tRNA ligase.